The following is a 1179-amino-acid chain: Integrin alpha-1 (1179 aa).

The N-terminal stretch at 1–28 (MAPRPRARPGVAVACCWLLTVVLRCCVS) is a signal peptide. At 29–1141 (FNVDVKNSMT…SKDGLPGRVP (1113 aa)) the chain is on the extracellular side. An FG-GAP 1 repeat occupies 30 to 91 (NVDVKNSMTF…CPVGRGESLP (62 aa)). N-linked (GlcNAc...) asparagine glycosylation is present at asparagine 74. An intrachain disulfide couples cysteine 82 to cysteine 92. Asparagine 100, asparagine 105, asparagine 112, asparagine 217, asparagine 317, asparagine 341, asparagine 402, asparagine 418, and asparagine 460 each carry an N-linked (GlcNAc...) asparagine glycan. The stretch at 101–160 (TSIPNVTEVKENMTFGSTLVTNPNGGFLACGPLYAYRCGHLHYTTGICSDVSPTFQVVNS) is one FG-GAP 2 repeat. The region spanning 161 to 360 (IAPVQECSTQ…IVKTLGERIF (200 aa)) is the VWFA domain. The FG-GAP 3 repeat unit spans residues 365 to 417 (TADQSAASFEMEMSQTGFSAHYSQDWVMLGAVGAYDWNGTVVMQKASQIIIPR). 4 FG-GAP repeats span residues 422-475 (NVES…DGNI), 476-538 (KILQ…RFEY), 557-615 (SCTT…TIRK), and 619-679 (QRIP…FEPN). Residues aspartate 498, aspartate 500, aspartate 502, and aspartate 506 each contribute to the Ca(2+) site. Residue asparagine 532 is glycosylated (N-linked (GlcNAc...) asparagine). Ca(2+)-binding residues include aspartate 580, asparagine 582, aspartate 584, aspartate 588, aspartate 642, asparagine 644, aspartate 646, and aspartate 650. Residues cysteine 688 and cysteine 697 are joined by a disulfide bond. N-linked (GlcNAc...) asparagine glycans are attached at residues asparagine 699, asparagine 748, and asparagine 780. An intrachain disulfide couples cysteine 703 to cysteine 756. Cysteine 808 and cysteine 814 are oxidised to a cystine. N-linked (GlcNAc...) asparagine glycans are attached at residues asparagine 840, asparagine 883, asparagine 908, asparagine 915, asparagine 939, asparagine 966, asparagine 974, and asparagine 1008. Cysteine 878 and cysteine 886 are oxidised to a cystine. 2 disulfides stabilise this stretch: cysteine 1030/cysteine 1062 and cysteine 1065/cysteine 1072. N-linked (GlcNAc...) asparagine glycosylation is found at asparagine 1073, asparagine 1083, asparagine 1102, and asparagine 1113. Residues 1142–1164 (LWVILLSAFAGLLLLMLLILALW) form a helical membrane-spanning segment. Residues 1165 to 1179 (KIGFFKRPLKKKMEK) are Cytoplasmic-facing. A GFFKR motif motif is present at residues 1167–1171 (GFFKR).

This sequence belongs to the integrin alpha chain family. Heterodimer of an alpha and a beta subunit. Alpha-1 associates with beta-1. Interacts with RAB21. Interacts (via cytoplasmic domain) with PTPN2; activates PTPN2 phosphatase activity towards EGFR and negatively regulates EGF signaling.

It localises to the membrane. In terms of biological role, integrin alpha-1/beta-1 is a receptor for laminin and collagen. It recognizes the proline-hydroxylated sequence G-F-P-G-E-R in collagen. Involved in anchorage-dependent, negative regulation of EGF-stimulated cell growth. In Homo sapiens (Human), this protein is Integrin alpha-1 (ITGA1).